Here is a 634-residue protein sequence, read N- to C-terminus: MRGLLLAGALALPASVFAHPAHQSYGLNRRTVDLNAFRLKSLAKYVNATETVIEAPSSFAPFKPQSYVEVATQHVKMIAPDATFRVVDDHYVGDNGVAHVHFRQTANGLDIDNADFNVNVGKDGKVFSYGNSFYTGQIPSSAALTKRDFSDPVTALKGTTNTLQLPITVDSASSESTEEKESYVFKGVSGTVSDPKAKLVYFVKDDGTLALAWRVETDIDSNWLLTYIDAKSGEEIHGVVDYVAEADYQVYAWGINDPTEGERTVIKDPWDSVASEFTWISDGSTNYTTSRGNNGIAQSNPSGGSSYLNNYRPSSSSLSFKYPYSVSSSPPSSYIDASIIQLFYTANIYHDLLYTLGFTEKAGNFEYNTNGQGGLGNDYVILNAQDGSGTNNANFATPPDGQPGRMRMYVWTESTPYRDGSFEAGIVIHEYTHGLSNRLTGGPANSNCLNALESGGMGEGWSDFMATAIRLKPGDKRSTDYTMGEWASNRAGGIRQYPYSTSLSTNPLTYTSVNSLNAVHAIGTVWASMLYEVLWNLIDKHGKNDAPKPTLRDGVPTDGKYLAMKLVMDGMALQPCNPNFVQARDAILDADTALTGGENQCEIWTAFAKRGLGAGAKYSSRNRVGSTEVPSGVC.

The first 18 residues, 1–18, serve as a signal peptide directing secretion; it reads MRGLLLAGALALPASVFA. A propeptide spanning residues 19–245 is cleaved from the precursor; that stretch reads HPAHQSYGLN…IHGVVDYVAE (227 aa). Asn-286 carries an N-linked (GlcNAc...) asparagine glycan. His-429 provides a ligand contact to Zn(2+). Residue Glu-430 is part of the active site. His-433 serves as a coordination point for Zn(2+).

It belongs to the peptidase M36 family. The cofactor is Zn(2+).

The protein resides in the secreted. Its function is as follows. Secreted metalloproteinase that allows assimilation of proteinaceous substrates and probably acts as a virulence factor. In Aspergillus fumigatus (strain CBS 144.89 / FGSC A1163 / CEA10) (Neosartorya fumigata), this protein is Extracellular metalloproteinase mep (mep).